We begin with the raw amino-acid sequence, 47 residues long: MKKITGIILLLLAVIILSACQANYIRDVQGGTVSPSSTAEVTGLATQ.

Positions 1 to 19 (MKKITGIILLLLAVIILSA) are cleaved as a signal peptide. Residue Cys-20 is the site of N-palmitoyl cysteine attachment. Residue Cys-20 is the site of S-diacylglycerol cysteine attachment.

The protein resides in the cell outer membrane. Its function is as follows. Lysis proteins are required for both colicin release and partial cell lysis. This is Lysis protein for colicins E2 and E3 (hic) from Escherichia coli.